The sequence spans 341 residues: N-acetyl-gamma-glutamyl-phosphate reductase (341 aa).

Cys148 is an active-site residue.

The protein belongs to the NAGSA dehydrogenase family. Type 1 subfamily.

It is found in the cytoplasm. It catalyses the reaction N-acetyl-L-glutamate 5-semialdehyde + phosphate + NADP(+) = N-acetyl-L-glutamyl 5-phosphate + NADPH + H(+). Its pathway is amino-acid biosynthesis; L-arginine biosynthesis; N(2)-acetyl-L-ornithine from L-glutamate: step 3/4. Catalyzes the NADPH-dependent reduction of N-acetyl-5-glutamyl phosphate to yield N-acetyl-L-glutamate 5-semialdehyde. This is N-acetyl-gamma-glutamyl-phosphate reductase from Pseudothermotoga lettingae (strain ATCC BAA-301 / DSM 14385 / NBRC 107922 / TMO) (Thermotoga lettingae).